The sequence spans 122 residues: Ribosome-binding factor A (122 aa).

Belongs to the RbfA family. As to quaternary structure, monomer. Binds 30S ribosomal subunits, but not 50S ribosomal subunits or 70S ribosomes.

The protein resides in the cytoplasm. Functionally, one of several proteins that assist in the late maturation steps of the functional core of the 30S ribosomal subunit. Associates with free 30S ribosomal subunits (but not with 30S subunits that are part of 70S ribosomes or polysomes). Required for efficient processing of 16S rRNA. May interact with the 5'-terminal helix region of 16S rRNA. The sequence is that of Ribosome-binding factor A from Albidiferax ferrireducens (strain ATCC BAA-621 / DSM 15236 / T118) (Rhodoferax ferrireducens).